Reading from the N-terminus, the 580-residue chain is Laccase-20 (580 aa).

Residues 1-23 (MVASLLCTVAVAVLAVAAVGGEA) form the signal peptide. Plastocyanin-like domains lie at 31 to 147 (VVHE…PRDG) and 156 to 310 (KDVP…YTSA). Residues Asn-36 and Asn-42 are each glycosylated (N-linked (GlcNAc...) asparagine). 2 residues coordinate Cu cation: His-81 and His-83. Asn-115 is a glycosylation site (N-linked (GlcNAc...) asparagine). Residues His-126 and His-128 each contribute to the Cu cation site. Residues Asn-200, Asn-339, Asn-392, Asn-429, and Asn-460 are each glycosylated (N-linked (GlcNAc...) asparagine). The Plastocyanin-like 3 domain maps to 419 to 561 (DFPVRPPRPY…ATAFIVEDGP (143 aa)). 8 residues coordinate Cu cation: Asn-478, His-481, His-483, His-540, Cys-541, His-542, His-546, and Met-551. A disordered region spans residues 560-580 (GPTPETSLPPPPPEFKRCDAS).

Belongs to the multicopper oxidase family. Cu cation is required as a cofactor.

It localises to the secreted. Its subcellular location is the extracellular space. The protein localises to the apoplast. It catalyses the reaction 4 hydroquinone + O2 = 4 benzosemiquinone + 2 H2O. Its function is as follows. Lignin degradation and detoxification of lignin-derived products. The sequence is that of Laccase-20 (LAC20) from Oryza sativa subsp. indica (Rice).